Consider the following 216-residue polypeptide: Potassium-transporting ATPase KdpC subunit (216 aa).

Residues 12-32 (LLGVSLLVFGLLYQGSLMAIG) form a helical membrane-spanning segment. Residues 197–207 (QNETDQNSDMN) show a composition bias toward polar residues. Residues 197 to 216 (QNETDQNSDMNASEIANGDH) are disordered.

Belongs to the KdpC family. The system is composed of three essential subunits: KdpA, KdpB and KdpC. The complex also contains KdpF, a small non-essential subunit.

The protein resides in the cell membrane. Functionally, part of the high-affinity ATP-driven potassium transport (or Kdp) system, which catalyzes the hydrolysis of ATP coupled with the electrogenic transport of potassium into the cytoplasm. This subunit acts as a catalytic chaperone that increases the ATP-binding affinity of the ATP-hydrolyzing subunit KdpB by the formation of a transient KdpB/KdpC/ATP ternary complex. The Kdp system is essential for growth under K(+) limitation, and for survival under desiccation and salt crystal inclusion. In Halobacterium salinarum (strain ATCC 29341 / DSM 671 / R1), this protein is Potassium-transporting ATPase KdpC subunit.